We begin with the raw amino-acid sequence, 230 residues long: Cell division ATP-binding protein FtsE (230 aa).

The ABC transporter domain maps to 3 to 228; sequence ITLDHVTKQY…RDEQRGVYGM (226 aa). An ATP-binding site is contributed by 37 to 44; sequence GPSGSGKS.

This sequence belongs to the ABC transporter superfamily. As to quaternary structure, homodimer. Forms a membrane-associated complex with FtsX.

It is found in the cell membrane. Functionally, part of the ABC transporter FtsEX involved in cellular division. Has ATPase activity. The sequence is that of Cell division ATP-binding protein FtsE from Mycobacterium tuberculosis (strain ATCC 25618 / H37Rv).